The following is a 662-amino-acid chain: Probable quinol oxidase subunit 1 (662 aa).

The next 2 helical transmembrane spans lie at 14–34 (WMII…IAVI) and 56–76 (IGIM…IDAL). Position 102 (H102) interacts with Fe(II)-heme a. The next 8 membrane-spanning stretches (helical) occupy residues 103–123 (GVIM…NVVI), 140–160 (VSFW…IVGG), 187–207 (IAIQ…FVTI), 228–248 (FITT…LALM), 273–293 (FFWV…FGMY), 311–331 (MIWA…HHFF), 336–356 (GALI…PTGV), and 376–396 (MLFS…GVML). H279, Y283, H328, and H329 together coordinate Cu cation. A cross-link (1'-histidyl-3'-tyrosine (His-Tyr)) is located at residues 279–283 (HPEVY). Heme a3 is bound at residue H414. 5 helical membrane-spanning segments follow: residues 415–435 (FHYT…IFWY), 451–471 (CFWF…ILGL), 492–512 (FIST…VASI), 587–604 (PVGF…FFLI), and 608–627 (IVPA…WRSF). Position 416 (H416) interacts with Fe(II)-heme a.

This sequence belongs to the heme-copper respiratory oxidase family. The cofactor is Cu cation. Ferriheme a serves as cofactor. Heme A3. is required as a cofactor.

It localises to the cell membrane. The catalysed reaction is 2 a quinol + O2 = 2 a quinone + 2 H2O. The protein operates within energy metabolism; oxidative phosphorylation. Catalyzes quinol oxidation with the concomitant reduction of oxygen to water. The sequence is that of Probable quinol oxidase subunit 1 (qoxB) from Staphylococcus epidermidis (strain ATCC 35984 / DSM 28319 / BCRC 17069 / CCUG 31568 / BM 3577 / RP62A).